Consider the following 282-residue polypeptide: MTIKLRFVASLALVFGLAAASVPAQASGGDTPHLQSWSFAGPFGQYDKAQLRRGFQVFQNVCVSCHTLENGGFRNLPSRAAPNWPLDEVRQLAASWPVQVKDINDKGDPMQRAPKLPDRIPSQYANEAAARIIHNGAVPPDLSVIAKARTFQRGFPWWVTDIFTQYNENGVDYIVALLNGYEDPPERFKVPDGSFYNKYFPGHIIGMTPPIADGLVTYGDGTPETQLQYSKDVAAFLMWAAEPTLDVRKRIGWWVLGFLVIFTGLLVATKIVVWRPVKKGLA.

The first 24 residues, 1–24 (MTIKLRFVASLALVFGLAAASVPA), serve as a signal peptide directing secretion. Heme c is bound by residues cysteine 62, cysteine 65, histidine 66, and methionine 207. Residues 253–273 (WWVLGFLVIFTGLLVATKIVV) traverse the membrane as a helical segment.

The main subunits of complex b-c1 are: cytochrome b, cytochrome c1 and the Rieske protein. In terms of processing, binds 1 heme c group covalently per subunit.

It is found in the cell membrane. Component of the ubiquinol-cytochrome c reductase complex (complex III or cytochrome b-c1 complex), which is a respiratory chain that generates an electrochemical potential coupled to ATP synthesis. c1 functions as an electron donor to cytochrome c. This is Cytochrome c1 (petC) from Blastochloris viridis (Rhodopseudomonas viridis).